We begin with the raw amino-acid sequence, 154 residues long: Large ribosomal subunit protein uL13 (154 aa).

Belongs to the universal ribosomal protein uL13 family. Part of the 50S ribosomal subunit.

Functionally, this protein is one of the early assembly proteins of the 50S ribosomal subunit, although it is not seen to bind rRNA by itself. It is important during the early stages of 50S assembly. In Cereibacter sphaeroides (strain ATCC 17029 / ATH 2.4.9) (Rhodobacter sphaeroides), this protein is Large ribosomal subunit protein uL13.